The primary structure comprises 124 residues: Small ribosomal subunit protein uS12 (124 aa).

At D89 the chain carries 3-methylthioaspartic acid. A disordered region spans residues 103–124 (DTAGVKDRRQSRSKYGAKSPKE).

The protein belongs to the universal ribosomal protein uS12 family. As to quaternary structure, part of the 30S ribosomal subunit. Contacts proteins S8 and S17. May interact with IF1 in the 30S initiation complex.

In terms of biological role, with S4 and S5 plays an important role in translational accuracy. Its function is as follows. Interacts with and stabilizes bases of the 16S rRNA that are involved in tRNA selection in the A site and with the mRNA backbone. Located at the interface of the 30S and 50S subunits, it traverses the body of the 30S subunit contacting proteins on the other side and probably holding the rRNA structure together. The combined cluster of proteins S8, S12 and S17 appears to hold together the shoulder and platform of the 30S subunit. In Prochlorococcus marinus (strain NATL1A), this protein is Small ribosomal subunit protein uS12.